Here is a 146-residue protein sequence, read N- to C-terminus: uncharacterized protein (146 aa).

In terms of domain architecture, N-acetyltransferase spans 7-146; that stretch reads LQINYKTDEL…EGHDILIWNP (140 aa).

This is an uncharacterized protein from Staphylococcus epidermidis (strain ATCC 35984 / DSM 28319 / BCRC 17069 / CCUG 31568 / BM 3577 / RP62A).